The following is a 380-amino-acid chain: Cytochrome b (380 aa).

Helical transmembrane passes span 34–54 (FGSL…LLAM), 78–99 (WLIR…YMHI), 114–134 (WNTG…GYVL), and 179–199 (FFAL…IHLT). Residues H84 and H98 each contribute to the heme b site. Heme b is bound by residues H183 and H197. An a ubiquinone-binding site is contributed by H202. Helical transmembrane passes span 227 to 247 (LKDI…ALFS), 289 to 309 (LGGV…PFLH), 321 to 341 (LSQS…WIGS), and 348 to 368 (FIII…ILFP).

It belongs to the cytochrome b family. In terms of assembly, the cytochrome bc1 complex contains 11 subunits: 3 respiratory subunits (MT-CYB, CYC1 and UQCRFS1), 2 core proteins (UQCRC1 and UQCRC2) and 6 low-molecular weight proteins (UQCRH/QCR6, UQCRB/QCR7, UQCRQ/QCR8, UQCR10/QCR9, UQCR11/QCR10 and a cleavage product of UQCRFS1). This cytochrome bc1 complex then forms a dimer. The cofactor is heme b.

It is found in the mitochondrion inner membrane. Its function is as follows. Component of the ubiquinol-cytochrome c reductase complex (complex III or cytochrome b-c1 complex) that is part of the mitochondrial respiratory chain. The b-c1 complex mediates electron transfer from ubiquinol to cytochrome c. Contributes to the generation of a proton gradient across the mitochondrial membrane that is then used for ATP synthesis. The sequence is that of Cytochrome b (MT-CYB) from Oceanodroma tristrami (Tristram's storm-petrel).